The chain runs to 431 residues: Homeobox protein knotted-1-like 3 (431 aa).

The tract at residues 15–47 (NHFTDQHQPPPPQPPPPPPQQQQHFQEAPPPNW) is disordered. Over residues 22–34 (QPPPPQPPPPPPQ) the composition is skewed to pro residues. The region spanning 322–342 (ELKHELKQGYKEKIVDIREEI) is the ELK domain. Positions 343–406 (LRKRRAGKLP…NQRKRNWHSN (64 aa)) form a DNA-binding region, homeobox; TALE-type. A disordered region spans residues 402 to 431 (NWHSNPSSSTVLKNKRKSNAGDNSGRERFA). The span at 404-413 (HSNPSSSTVL) shows a compositional bias: polar residues.

Belongs to the TALE/KNOX homeobox family. May form heterodimeric complex with the TALE/BELL proteins. Interacts with OFP1, OFP2, OFP4, OFP12 and OFP14. Interacts with KNATM-B.

It is found in the nucleus. In Arabidopsis thaliana (Mouse-ear cress), this protein is Homeobox protein knotted-1-like 3 (KNAT3).